The chain runs to 113 residues: Hydrogenase maturation factor HypA (113 aa).

Histidine 2 contributes to the Ni(2+) binding site. Cysteine 73, cysteine 76, cysteine 89, and cysteine 92 together coordinate Zn(2+).

The protein belongs to the HypA/HybF family.

Functionally, involved in the maturation of [NiFe] hydrogenases. Required for nickel insertion into the metal center of the hydrogenase. The chain is Hydrogenase maturation factor HypA from Aeromonas salmonicida (strain A449).